Reading from the N-terminus, the 1138-residue chain is uncharacterized protein (1138 aa).

Disordered stretches follow at residues 985-1015 and 1094-1138; these read EKKL…MAQE and LVAT…QNKL. The span at 1110–1138 shows a compositional bias: acidic residues; it reads DDDEYEKYDSGIEDIETDVDEEEEVQNKL.

This is an uncharacterized protein from Ostreid herpesvirus 1 (isolate France) (OsHV-1).